A 514-amino-acid polypeptide reads, in one-letter code: Transmembrane protein 117 (514 aa).

Over 1 to 15 the chain is Cytoplasmic; it reads MGKDFRYYFQHPWSR. The helical transmembrane segment at 16 to 36 threads the bilayer; the sequence is MIVAYLVIFFNFLIFAEDPVS. Topologically, residues 37-65 are extracellular; it reads HSQTEANVIVVGNCFSFVTNKYPRGVGWR. The helical transmembrane segment at 66-86 threads the bilayer; the sequence is ILKVLLWLLAILTGLIAGKFL. Residues 87-110 are Cytoplasmic-facing; the sequence is FHQRLFGQLLRLKMFREDHGSWMT. The chain crosses the membrane as a helical span at residues 111 to 131; sequence MFFSTILFLFIFSHIYNTILL. The Extracellular segment spans residues 132–154; sequence MDGNMGAYIITDYMGIRNESFMK. Residues 155–175 traverse the membrane as a helical segment; it reads LAAVGTWMGDFVTAWMVTDMM. The Cytoplasmic segment spans residues 176 to 198; that stretch reads LQDKPYPDWGKSARAFWKKGNVR. The helical transmembrane segment at 199–219 threads the bilayer; that stretch reads ITLFWTVLFTLTSVVVLVITT. At 220–239 the chain is on the extracellular side; it reads DWISWDKLNRGFLPSDEVSR. A helical transmembrane segment spans residues 240-260; it reads AFLASFILVFDLLIVMQDWEF. Over 261–295 the chain is Cytoplasmic; the sequence is PHFMGDVDVNLPGLHTPHMQFKIPFFQKIFKEEYR. A helical membrane pass occupies residues 296–316; that stretch reads IHITGKWFNYGIIFLVLILDL. Residues 317-394 lie on the Extracellular side of the membrane; the sequence is NMWKNQIFYK…FIGASLDVKC (78 aa). N-linked (GlcNAc...) asparagine glycosylation is found at Asn353 and Asn371. Residues 395 to 415 traverse the membrane as a helical segment; that stretch reads LAFVPSLIAFVWFGFFIWFFG. Topologically, residues 416–514 are cytoplasmic; the sequence is RFLKNEPRME…PTTSKSTPTN (99 aa). Disordered stretches follow at residues 429-459 and 486-514; these read KTYT…SVED and ENLS…TPTN. The segment covering 438–448 has biased composition (basic and acidic residues); that stretch reads SPSEHSKDMGI. A Phosphothreonine modification is found at Thr453.

Belongs to the TMEM117 family.

Its subcellular location is the cell membrane. Its function is as follows. Involved in endoplasmic reticulum (ER) stress-induced cell death pathway. This Homo sapiens (Human) protein is Transmembrane protein 117 (TMEM117).